The primary structure comprises 230 residues: MVNLEELSLKRNNMKRTETTFTDISGKRYQVANINEENSESNRIELNRTSGFVIDTKPDDLSHKIEIIIPQSILNNNNNNYESINLYIGSQDAAFNKLDLQLKNIKSILNVGIGINNLFTKENSDINDGFIINYCNVEIFDDVNFNIIEKFDKCFEFIDSNIGGVENNGILVHCNAGVSRSATILISYLMKKLKIPLSLSLEILKSSRPQCKPNQGFLKQLEIFEKELLF.

The Tyrosine-protein phosphatase domain occupies 78–230; sequence NNNYESINLY…LEIFEKELLF (153 aa). Catalysis depends on C174, which acts as the Phosphocysteine intermediate.

This sequence belongs to the protein-tyrosine phosphatase family. Non-receptor class dual specificity subfamily.

It carries out the reaction O-phospho-L-tyrosyl-[protein] + H2O = L-tyrosyl-[protein] + phosphate. The catalysed reaction is O-phospho-L-seryl-[protein] + H2O = L-seryl-[protein] + phosphate. It catalyses the reaction O-phospho-L-threonyl-[protein] + H2O = L-threonyl-[protein] + phosphate. In terms of biological role, has a dual specificity toward Ser/Thr and Tyr-containing proteins. The protein is Probable dual specificity protein phosphatase DDB_G0283417 of Dictyostelium discoideum (Social amoeba).